The following is a 375-amino-acid chain: tRNA-specific 2-thiouridylase MnmA (375 aa).

ATP is bound by residues 16-23 (GMSGGVDS) and M42. Residues 102-104 (NPD) form an interaction with target base in tRNA region. C107 (nucleophile) is an active-site residue. Cysteines 107 and 203 form a disulfide. G131 contacts ATP. The tract at residues 153–155 (KDQ) is interaction with tRNA. The active-site Cysteine persulfide intermediate is the C203. Positions 315 to 316 (RY) are interaction with tRNA.

Belongs to the MnmA/TRMU family.

Its subcellular location is the cytoplasm. It carries out the reaction S-sulfanyl-L-cysteinyl-[protein] + uridine(34) in tRNA + AH2 + ATP = 2-thiouridine(34) in tRNA + L-cysteinyl-[protein] + A + AMP + diphosphate + H(+). In terms of biological role, catalyzes the 2-thiolation of uridine at the wobble position (U34) of tRNA, leading to the formation of s(2)U34. The polypeptide is tRNA-specific 2-thiouridylase MnmA (Pseudomonas aeruginosa (strain LESB58)).